We begin with the raw amino-acid sequence, 431 residues long: L-lysine N6-monooxygenase MbtG (431 aa).

The signal sequence occupies residues Met-1–Ala-21.

It belongs to the lysine N(6)-hydroxylase/L-ornithine N(5)-oxygenase family. FAD serves as cofactor.

It carries out the reaction L-lysine + NADPH + O2 = N(6)-hydroxy-L-lysine + NADP(+) + H2O. Its pathway is siderophore biosynthesis; mycobactin biosynthesis. Its function is as follows. Flavoprotein monooxygenase required for N-hydroxylation of the two acylated lysine residues during mycobactin assembly, thus producing the hydroxamate groups necessary for iron sequestration. Is also able, but less efficiently, to hydroxylate L-lysine (non acylated) in vitro. The protein is L-lysine N6-monooxygenase MbtG (mbtG) of Mycobacterium bovis (strain ATCC BAA-935 / AF2122/97).